A 175-amino-acid chain; its full sequence is RNA pyrophosphohydrolase (175 aa).

The Nudix hydrolase domain occupies 8–159 (PYRTCVGMML…KRPVYERVVK (152 aa)). Positions 47-68 (GGVDPGEDPWTAAKRELYEETS) match the Nudix box motif.

Belongs to the Nudix hydrolase family. RppH subfamily. A divalent metal cation serves as cofactor.

In terms of biological role, accelerates the degradation of transcripts by removing pyrophosphate from the 5'-end of triphosphorylated RNA, leading to a more labile monophosphorylated state that can stimulate subsequent ribonuclease cleavage. This is RNA pyrophosphohydrolase from Rhodopseudomonas palustris (strain BisB18).